A 407-amino-acid chain; its full sequence is Shaggy-related protein kinase iota (407 aa).

Positions 1–19 are enriched in low complexity; sequence MASLPLGPQPHALAPPLQL. The segment at 1–23 is disordered; that stretch reads MASLPLGPQPHALAPPLQLHDGD. Alanine 2 bears the N-acetylalanine mark. Positions 70-354 constitute a Protein kinase domain; sequence YMAERVVGTG…ALEACAHPFF (285 aa). ATP contacts are provided by residues 76-84 and lysine 99; that span reads VGTGSFGIV. Residue aspartate 195 is the Proton acceptor of the active site. Residue tyrosine 230 is modified to Phosphotyrosine.

It belongs to the protein kinase superfamily. CMGC Ser/Thr protein kinase family. GSK-3 subfamily. Binds to KIB1. Interacts with BSK6. In terms of processing, autophosphorylated mainly on threonine and serine residues.

It catalyses the reaction L-seryl-[protein] + ATP = O-phospho-L-seryl-[protein] + ADP + H(+). It carries out the reaction L-threonyl-[protein] + ATP = O-phospho-L-threonyl-[protein] + ADP + H(+). In terms of biological role, phosphorylates BSK1, BSK3, BSK5, BSK6, BSK8 and BSK11 in vitro. May mediate extracellular signals to regulate transcription in differentiating cells. This Arabidopsis thaliana (Mouse-ear cress) protein is Shaggy-related protein kinase iota (ASK9).